The primary structure comprises 158 residues: Cyclic pyranopterin monophosphate synthase (158 aa).

Substrate-binding positions include 75–77 (LCH) and 111–112 (ME). The active site involves aspartate 126.

It belongs to the MoaC family. In terms of assembly, homohexamer; trimer of dimers.

It carries out the reaction (8S)-3',8-cyclo-7,8-dihydroguanosine 5'-triphosphate = cyclic pyranopterin phosphate + diphosphate. The protein operates within cofactor biosynthesis; molybdopterin biosynthesis. Its function is as follows. Catalyzes the conversion of (8S)-3',8-cyclo-7,8-dihydroguanosine 5'-triphosphate to cyclic pyranopterin monophosphate (cPMP). This Caulobacter vibrioides (strain ATCC 19089 / CIP 103742 / CB 15) (Caulobacter crescentus) protein is Cyclic pyranopterin monophosphate synthase.